Reading from the N-terminus, the 387-residue chain is 3-ketoacyl-CoA thiolase (387 aa).

Cysteine 91 acts as the Acyl-thioester intermediate in catalysis. Catalysis depends on proton acceptor residues histidine 343 and cysteine 373.

This sequence belongs to the thiolase-like superfamily. Thiolase family. In terms of assembly, heterotetramer of two alpha chains (FadB) and two beta chains (FadA).

The protein localises to the cytoplasm. It catalyses the reaction an acyl-CoA + acetyl-CoA = a 3-oxoacyl-CoA + CoA. The protein operates within lipid metabolism; fatty acid beta-oxidation. In terms of biological role, catalyzes the final step of fatty acid oxidation in which acetyl-CoA is released and the CoA ester of a fatty acid two carbons shorter is formed. This Idiomarina loihiensis (strain ATCC BAA-735 / DSM 15497 / L2-TR) protein is 3-ketoacyl-CoA thiolase.